A 296-amino-acid chain; its full sequence is Origin of replication complex subunit 6 (296 aa).

The disordered stretch occupies residues 212 to 296; it reads PSKRKHDDDS…MALEVSSAAN (85 aa). A compositionally biased stretch (acidic residues) spans 220-236; sequence DSDSSGESSGDDQDELD. Polar residues predominate over residues 254-264; that stretch reads WKSSVLSSNKQ.

Belongs to the ORC6 family. As to quaternary structure, component of the origin recognition complex (ORC) composed of at least ORC1, ORC2, ORC3, ORC4, ORC5 and ORC6. ORC is regulated in a cell-cycle and development dependent manner. It is sequentially assembled at the exit from anaphase of mitosis and disassembled as cells enter S phase.

The protein resides in the nucleus. Functionally, component of the origin recognition complex (ORC) that binds origins of replication. DNA-binding is ATP-dependent. The specific DNA sequences that define origins of replication have not been identified yet. ORC is required to assemble the pre-replication complex necessary to initiate DNA replication. This chain is Origin of replication complex subunit 6, found in Oryza sativa subsp. indica (Rice).